Here is a 384-residue protein sequence, read N- to C-terminus: Putative glutamate--cysteine ligase 2-2 (384 aa).

The protein belongs to the glutamate--cysteine ligase type 2 family. YbdK subfamily.

It catalyses the reaction L-cysteine + L-glutamate + ATP = gamma-L-glutamyl-L-cysteine + ADP + phosphate + H(+). Functionally, ATP-dependent carboxylate-amine ligase which exhibits weak glutamate--cysteine ligase activity. The chain is Putative glutamate--cysteine ligase 2-2 from Rubrobacter xylanophilus (strain DSM 9941 / JCM 11954 / NBRC 16129 / PRD-1).